An 86-amino-acid polypeptide reads, in one-letter code: Exodeoxyribonuclease 7 small subunit (86 aa).

A disordered region spans residues 67 to 86; sequence LSDPAQPEASEPFDPPSHDG.

Belongs to the XseB family. Heterooligomer composed of large and small subunits.

Its subcellular location is the cytoplasm. The enzyme catalyses Exonucleolytic cleavage in either 5'- to 3'- or 3'- to 5'-direction to yield nucleoside 5'-phosphates.. Bidirectionally degrades single-stranded DNA into large acid-insoluble oligonucleotides, which are then degraded further into small acid-soluble oligonucleotides. This chain is Exodeoxyribonuclease 7 small subunit, found in Stenotrophomonas maltophilia (strain K279a).